Consider the following 230-residue polypeptide: MGQKVHPNGIRLGITKPWISTWYADKSDYANNLHSDWEVRKFLEKKLEAASVSKIVIERPAKSIRVTIHTARPGVVIGKKGEDVEVLRAEVAKISGTPAQINIAEIRKPELDAKLVADSIAQQLERRVMFRRAMKRAVQNAMRIGAQGIKVEVSGRLGGAEIARTEWYREGRVPLHTLRADIDYATSESHTTYGVIGIKVWVFKGEVLDGMLPQVEEPKQQQPKRKPRGK.

One can recognise a KH type-2 domain in the interval 39-107 (VRKFLEKKLE…PAQINIAEIR (69 aa)).

This sequence belongs to the universal ribosomal protein uS3 family. In terms of assembly, part of the 30S ribosomal subunit. Forms a tight complex with proteins S10 and S14.

In terms of biological role, binds the lower part of the 30S subunit head. Binds mRNA in the 70S ribosome, positioning it for translation. This chain is Small ribosomal subunit protein uS3, found in Shewanella amazonensis (strain ATCC BAA-1098 / SB2B).